A 467-amino-acid polypeptide reads, in one-letter code: 3-isopropylmalate dehydratase large subunit (467 aa).

Cys347, Cys407, and Cys410 together coordinate [4Fe-4S] cluster.

This sequence belongs to the aconitase/IPM isomerase family. LeuC type 1 subfamily. Heterodimer of LeuC and LeuD. It depends on [4Fe-4S] cluster as a cofactor.

It catalyses the reaction (2R,3S)-3-isopropylmalate = (2S)-2-isopropylmalate. It functions in the pathway amino-acid biosynthesis; L-leucine biosynthesis; L-leucine from 3-methyl-2-oxobutanoate: step 2/4. Functionally, catalyzes the isomerization between 2-isopropylmalate and 3-isopropylmalate, via the formation of 2-isopropylmaleate. The protein is 3-isopropylmalate dehydratase large subunit of Pelagibacter ubique (strain HTCC1062).